A 151-amino-acid chain; its full sequence is Centrin-A (151 aa).

2 consecutive EF-hand domains span residues 80-115 (DVYA…LGEA) and 116-151 (RSDS…KKIY). Residues aspartate 93, aspartate 95, serine 97, tyrosine 99, aspartate 104, aspartate 129, asparagine 131, aspartate 133, lysine 135, and glutamate 140 each contribute to the Ca(2+) site.

It belongs to the centrin family.

Its subcellular location is the cytoplasm. The protein resides in the cytoskeleton. It localises to the microtubule organizing center. It is found in the centrosome. The protein localises to the nucleus. Its function is as follows. Plays a fundamental role in microtubule-organizing center structure and function. The sequence is that of Centrin-A (cenA) from Dictyostelium discoideum (Social amoeba).